We begin with the raw amino-acid sequence, 501 residues long: Lysine--tRNA ligase (501 aa).

Positions 402 and 409 each coordinate Mg(2+).

Belongs to the class-II aminoacyl-tRNA synthetase family. In terms of assembly, homodimer. Mg(2+) serves as cofactor.

The protein resides in the cytoplasm. It carries out the reaction tRNA(Lys) + L-lysine + ATP = L-lysyl-tRNA(Lys) + AMP + diphosphate. The chain is Lysine--tRNA ligase from Helicobacter pylori (strain P12).